The chain runs to 144 residues: Large ribosomal subunit protein uL13 (144 aa).

It belongs to the universal ribosomal protein uL13 family. In terms of assembly, part of the 50S ribosomal subunit.

Functionally, this protein is one of the early assembly proteins of the 50S ribosomal subunit, although it is not seen to bind rRNA by itself. It is important during the early stages of 50S assembly. This is Large ribosomal subunit protein uL13 from Clostridium botulinum (strain ATCC 19397 / Type A).